The following is a 45-amino-acid chain: MATETATLVTTFLSRSLVSFTGYALYTAFGKPSKELRDPFEEHED.

A helical membrane pass occupies residues 12 to 30; sequence FLSRSLVSFTGYALYTAFG.

This sequence belongs to the PsbN family.

It is found in the plastid. Its subcellular location is the chloroplast thylakoid membrane. Functionally, may play a role in photosystem I and II biogenesis. In Adiantum capillus-veneris (Maidenhair fern), this protein is Protein PsbN.